The sequence spans 373 residues: Quinolinate synthase (373 aa).

Iminosuccinate is bound by residues histidine 46 and serine 63. Position 109 (cysteine 109) interacts with [4Fe-4S] cluster. Iminosuccinate-binding positions include 142–144 (YMN) and serine 163. Residue cysteine 232 participates in [4Fe-4S] cluster binding. Iminosuccinate contacts are provided by residues 258–260 (HPE) and threonine 275. Cysteine 324 contributes to the [4Fe-4S] cluster binding site.

The protein belongs to the quinolinate synthase family. Type 3 subfamily. [4Fe-4S] cluster is required as a cofactor.

The protein resides in the cytoplasm. The enzyme catalyses iminosuccinate + dihydroxyacetone phosphate = quinolinate + phosphate + 2 H2O + H(+). The protein operates within cofactor biosynthesis; NAD(+) biosynthesis; quinolinate from iminoaspartate: step 1/1. Its function is as follows. Catalyzes the condensation of iminoaspartate with dihydroxyacetone phosphate to form quinolinate. The polypeptide is Quinolinate synthase (Acidobacterium capsulatum (strain ATCC 51196 / DSM 11244 / BCRC 80197 / JCM 7670 / NBRC 15755 / NCIMB 13165 / 161)).